The sequence spans 590 residues: Interferon alpha/beta receptor 1 (590 aa).

The signal sequence occupies residues 1-26; that stretch reads MLAVVGAAALVLVAGAPWVLPSAAGG. At 27-429 the chain is on the extracellular side; it reads ENLKPPENID…EKTRPGSFST (403 aa). Fibronectin type-III domains lie at 31-125, 127-226, 230-327, and 332-425; these read PPEN…PFYT, HMSP…TTVA, PVPG…FIDS, and LPPP…TRPG. N-linked (GlcNAc...) asparagine glycosylation is present at N43. A disulfide bridge links C78 with C86. N109, N181, and N214 each carry an N-linked (GlcNAc...) asparagine glycan. Intrachain disulfides connect C199/C220 and C284/C292. N-linked (GlcNAc...) asparagine glycosylation is found at N314, N370, N409, and N413. An intrachain disulfide couples C397 to C419. The helical transmembrane segment at 430-449 threads the bilayer; sequence IWIITGLGVVFFSVMVLYAL. Residues 450-590 are Cytoplasmic-facing; that stretch reads RSVWKYLCHV…ALRTEPALLC (141 aa). Positions 483–492 are important for interaction with TYK2; that stretch reads VLLTAEEHTE. The segment at 514–545 is disordered; it reads DLRKYSSQTSQDSGNYSNEEEESVGTESGQAV. K517 is covalently cross-linked (Glycyl lysine isopeptide (Lys-Gly) (interchain with G-Cter in ubiquitin)). A compositionally biased stretch (polar residues) spans 518 to 530; the sequence is YSSQTSQDSGNYS. At S526 the chain carries Phosphoserine.

It belongs to the type II cytokine receptor family. In terms of assembly, heterodimer with IFNAR2; forming the receptor for type I interferon. Interacts with TYK2. Interacts with STAT1 and STAT2. Interacts (serine-phosphorylated form) with FBXW11, the substrate recognition component of a SCF (SKP1-CUL1-F-box protein) E3 ubiquitin-protein ligase complex. 3Interacts with SHMT2; this promotes interaction with ABRAXAS2 and the BRISC complex. Interacts with TRIM10; this interaction prevents association between IFNAR1 and TYK2. Post-translationally, ubiquitinated. This leads to its internalization and lysosomal degradation. The 'Lys-63'-linked ubiquitin chains are cleaved off by the BRISC complex; this prevents receptor internalization and degradation. Probable ubiquitination sites have been identified in human, but are poorly conserved across species. Phosphorylated on serine residues in response to interferon binding; this promotes interaction with FBXW11 and ubiquitination.

The protein localises to the cell membrane. It localises to the late endosome. It is found in the lysosome. Functionally, together with IFNAR2, forms the heterodimeric receptor for type I interferons (including interferons alpha, beta, epsilon, omega and kappa). Type I interferon binding activates the JAK-STAT signaling cascade, and triggers tyrosine phosphorylation of a number of proteins including JAKs, TYK2, STAT proteins and the IFNR alpha- and beta-subunits themselves. STAT proteins are then phosphorylated by the JAKs, promoting their translocation into the nucleus to regulate expression of interferon-regulated genes. Can also act independently of IFNAR2: form an active IFNB1 receptor by itself and activate a signaling cascade that does not involve activation of the JAK-STAT pathway. The chain is Interferon alpha/beta receptor 1 (Ifnar1) from Mus musculus (Mouse).